Consider the following 149-residue polypeptide: Large-conductance mechanosensitive channel (149 aa).

The next 2 membrane-spanning stretches (helical) occupy residues 8 to 28 (FIMR…SAFT) and 74 to 94 (IGSV…LFLI).

Belongs to the MscL family. As to quaternary structure, homopentamer.

The protein resides in the cell membrane. In terms of biological role, channel that opens in response to stretch forces in the membrane lipid bilayer. May participate in the regulation of osmotic pressure changes within the cell. The sequence is that of Large-conductance mechanosensitive channel from Enterococcus faecalis (strain ATCC 700802 / V583).